The chain runs to 528 residues: Protein MGF 505-7R (528 aa).

5 ANK repeats span residues 54–83, 129–158, 261–290, 292–321, and 322–352; these read SIND…NLHY, GCDL…LLNV, SVKR…IPRG, IERL…YKVK, and NVKK…LLDA.

Belongs to the asfivirus MGF 505 family. As to quaternary structure, interacts with host STING1. Interacts with host JAK1; this interaction leads to JAK1 degradation. Interacts with host JAK2; this interaction leads to JAK2 degradation. Interacts with host RELA; this interaction inhibits NF-kappa-B promoter activity.

The protein resides in the host cytoplasm. Its function is as follows. Plays a role in virus cell tropism, and may be required for efficient virus replication in macrophages. Interferes with host NF-kappa-B promoter activity mediated by TLR8. Mechanistically, inhibits the phosphorylation and subsequent nuclear translocation of host NF-kappa-B RELA subunit downstream of TLR8. Promotes the expression of the autophagy-related protein host ULK1 to degrade host STING and inhibit the interferon response. Inhibits also JAK1- and JAK2-mediated signaling and thus negatively regulates the IFN-gamma signaling. The polypeptide is Protein MGF 505-7R (African swine fever virus (strain Badajoz 1971 Vero-adapted) (Ba71V)).